The sequence spans 353 residues: Photosystem II protein D1 (353 aa).

Position 2 is an N-acetylthreonine (threonine 2). Threonine 2 is modified (phosphothreonine). Transmembrane regions (helical) follow at residues 29–46 (YIGWFGVLMIPTLLTATS), 118–133 (HFLLGVACYMGREWEL), and 142–156 (WIAVAYSAPVAAATA). Histidine 118 contacts chlorophyll a. Tyrosine 126 lines the pheophytin a pocket. Residues aspartate 170 and glutamate 189 each contribute to the [CaMn4O5] cluster site. Residues 197–218 (FHMLGVAGVFGGSLFSAMHGSL) traverse the membrane as a helical segment. Histidine 198 provides a ligand contact to chlorophyll a. A quinone-binding positions include histidine 215 and 264 to 265 (SF). Position 215 (histidine 215) interacts with Fe cation. Histidine 272 contributes to the Fe cation binding site. The helical transmembrane segment at 274–288 (FLAAWPVVGIWFTAL) threads the bilayer. Histidine 332, glutamate 333, aspartate 342, and alanine 344 together coordinate [CaMn4O5] cluster. Positions 345–353 (AVEAPSING) are excised as a propeptide.

It belongs to the reaction center PufL/M/PsbA/D family. In terms of assembly, PSII is composed of 1 copy each of membrane proteins PsbA, PsbB, PsbC, PsbD, PsbE, PsbF, PsbH, PsbI, PsbJ, PsbK, PsbL, PsbM, PsbT, PsbX, PsbY, PsbZ, Psb30/Ycf12, at least 3 peripheral proteins of the oxygen-evolving complex and a large number of cofactors. It forms dimeric complexes. It depends on The D1/D2 heterodimer binds P680, chlorophylls that are the primary electron donor of PSII, and subsequent electron acceptors. It shares a non-heme iron and each subunit binds pheophytin, quinone, additional chlorophylls, carotenoids and lipids. D1 provides most of the ligands for the Mn4-Ca-O5 cluster of the oxygen-evolving complex (OEC). There is also a Cl(-1) ion associated with D1 and D2, which is required for oxygen evolution. The PSII complex binds additional chlorophylls, carotenoids and specific lipids. as a cofactor. Post-translationally, tyr-161 forms a radical intermediate that is referred to as redox-active TyrZ, YZ or Y-Z. C-terminally processed by CTPA; processing is essential to allow assembly of the oxygen-evolving complex and thus photosynthetic growth.

The protein resides in the plastid. It localises to the chloroplast thylakoid membrane. The enzyme catalyses 2 a plastoquinone + 4 hnu + 2 H2O = 2 a plastoquinol + O2. Its function is as follows. Photosystem II (PSII) is a light-driven water:plastoquinone oxidoreductase that uses light energy to abstract electrons from H(2)O, generating O(2) and a proton gradient subsequently used for ATP formation. It consists of a core antenna complex that captures photons, and an electron transfer chain that converts photonic excitation into a charge separation. The D1/D2 (PsbA/PsbD) reaction center heterodimer binds P680, the primary electron donor of PSII as well as several subsequent electron acceptors. The sequence is that of Photosystem II protein D1 from Medicago sativa (Alfalfa).